Consider the following 237-residue polypeptide: 1-(5-phosphoribosyl)-5-[(5-phosphoribosylamino)methylideneamino] imidazole-4-carboxamide isomerase (237 aa).

Residue Asp-8 is the Proton acceptor of the active site. Asp-129 acts as the Proton donor in catalysis.

It belongs to the HisA/HisF family.

It localises to the cytoplasm. The catalysed reaction is 1-(5-phospho-beta-D-ribosyl)-5-[(5-phospho-beta-D-ribosylamino)methylideneamino]imidazole-4-carboxamide = 5-[(5-phospho-1-deoxy-D-ribulos-1-ylimino)methylamino]-1-(5-phospho-beta-D-ribosyl)imidazole-4-carboxamide. Its pathway is amino-acid biosynthesis; L-histidine biosynthesis; L-histidine from 5-phospho-alpha-D-ribose 1-diphosphate: step 4/9. The polypeptide is 1-(5-phosphoribosyl)-5-[(5-phosphoribosylamino)methylideneamino] imidazole-4-carboxamide isomerase (Roseiflexus castenholzii (strain DSM 13941 / HLO8)).